The following is a 333-amino-acid chain: Protoheme IX farnesyltransferase (333 aa).

The next 7 membrane-spanning stretches (helical) occupy residues 64–84 (LICTLGGGALAAAAAGALNCL), 110–130 (TVFLAAVSCTLAASMLLVSGV), 133–153 (LAAGLTLLGLFSYVILYTVIL), 161–181 (IVFGGVAGAIPPLVGASAATG), 189–209 (WLFGLVMLWTPAHFWALAILL), 246–266 (IMGVFALPEGGLLYGIMLLPF), and 287–307 (AKSLFRWSILYMFGICLLLLI).

It belongs to the UbiA prenyltransferase family. Protoheme IX farnesyltransferase subfamily.

It is found in the cell inner membrane. It catalyses the reaction heme b + (2E,6E)-farnesyl diphosphate + H2O = Fe(II)-heme o + diphosphate. It participates in porphyrin-containing compound metabolism; heme O biosynthesis; heme O from protoheme: step 1/1. Its function is as follows. Converts heme B (protoheme IX) to heme O by substitution of the vinyl group on carbon 2 of heme B porphyrin ring with a hydroxyethyl farnesyl side group. The chain is Protoheme IX farnesyltransferase from Prochlorococcus marinus (strain MIT 9215).